A 224-amino-acid chain; its full sequence is Protein-L-isoaspartate O-methyltransferase (224 aa).

Serine 63 is a catalytic residue.

The protein belongs to the methyltransferase superfamily. L-isoaspartyl/D-aspartyl protein methyltransferase family.

It localises to the cytoplasm. The catalysed reaction is [protein]-L-isoaspartate + S-adenosyl-L-methionine = [protein]-L-isoaspartate alpha-methyl ester + S-adenosyl-L-homocysteine. In terms of biological role, catalyzes the methyl esterification of L-isoaspartyl residues in peptides and proteins that result from spontaneous decomposition of normal L-aspartyl and L-asparaginyl residues. It plays a role in the repair and/or degradation of damaged proteins. This Herpetosiphon aurantiacus (strain ATCC 23779 / DSM 785 / 114-95) protein is Protein-L-isoaspartate O-methyltransferase.